A 191-amino-acid chain; its full sequence is Early nodulin-like protein 8 (191 aa).

Positions 1–22 (MGVMSLSKTMVVVVLQVMILLG) are cleaved as a signal peptide. The Phytocyanin domain maps to 31 to 133 (TLYKVGDLDA…YQKLLVSVGT (103 aa)). A disulfide bridge connects residues cysteine 87 and cysteine 121. 2 N-linked (GlcNAc...) asparagine glycosylation sites follow: asparagine 104 and asparagine 108. Serine 165 carries GPI-anchor amidated serine lipidation. The propeptide at 166-191 (SASSSLISAFSTVAASLACAVVGAIM) is removed in mature form.

The protein belongs to the early nodulin-like (ENODL) family. In terms of tissue distribution, mostly expressed in seedlings and roots, and, to a lower extent, in leaves, flowers, stems and seeds.

Its subcellular location is the cell membrane. Its function is as follows. May act as a carbohydrate transporter. The polypeptide is Early nodulin-like protein 8 (Arabidopsis thaliana (Mouse-ear cress)).